The sequence spans 107 residues: Ribosome-associated factor Y (107 aa).

A disordered region spans residues 85–107; the sequence is LNKLQHKSESRRADERLKDSFEN.

Associates mainly with 70S ribosomes.

During stationary phase, prevents 70S dimer formation, probably in order to regulate translation efficiency during transition between the exponential and the stationary phases. In addition, during environmental stress such as cold shock or excessive cell density at stationary phase, stabilizes the 70S ribosome against dissociation, inhibits translation initiation and increase translation accuracy. When normal growth conditions are restored, is quickly released from the ribosome. This Haemophilus influenzae (strain ATCC 51907 / DSM 11121 / KW20 / Rd) protein is Ribosome-associated factor Y.